A 571-amino-acid chain; its full sequence is Protein E6 homolog (571 aa).

Belongs to the chordopoxvirinae E6 family.

It localises to the virion. Its function is as follows. Late protein which may play a role in the virion morphogenesis and have therefore an indirect role on viral transcription ability. This chain is Protein E6 homolog, found in Vertebrata (FPV).